A 621-amino-acid chain; its full sequence is Ubiquitin-like-specific protease 1 (621 aa).

Position 2 is an N-acetylserine (Ser2). A phosphoserine mark is found at Ser21 and Ser25. Disordered stretches follow at residues 116-150 (FDGS…ENYS) and 169-196 (RRRI…SNCD). The segment covering 124-141 (SGNSDVESRSSGSRSSDV) has biased composition (low complexity). Position 179 is a phosphothreonine (Thr179). The segment covering 179-196 (TPSTSPISSLASQKSNCD) has biased composition (polar residues). Ser264 is modified (phosphoserine). The interval 432 to 621 (NIEITVRDFK…AHLILTDALK (190 aa)) is protease. Catalysis depends on residues His514, Asp531, and Cys580.

It belongs to the peptidase C48 family.

It catalyses the reaction Hydrolysis of the alpha-linked peptide bond in the sequence Gly-Gly-|-Ala-Thr-Tyr at the C-terminal end of the small ubiquitin-like modifier (SUMO) propeptide, Smt3, leading to the mature form of the protein. A second reaction involves the cleavage of an epsilon-linked peptide bond between the C-terminal glycine of the mature SUMO and the lysine epsilon-amino group of the target protein.. Protease that catalyzes two essential functions in the SUMO pathway: processing of full-length SMT3 to its mature form and deconjugation of SMT3 from targeted proteins. Has an essential role in the G2/M phase of the cell cycle. The chain is Ubiquitin-like-specific protease 1 (ULP1) from Saccharomyces cerevisiae (strain ATCC 204508 / S288c) (Baker's yeast).